The primary structure comprises 858 residues: Heat shock protein 105 kDa (858 aa).

N-acetylserine is present on serine 2. An N6-acetyllysine modification is found at lysine 471. Disordered stretches follow at residues 500–585 and 801–858; these read KVPT…PPEA and VTQP…MDLD. Over residues 504 to 515 the composition is skewed to acidic residues; the sequence is EEEDGSSVEADM. Residues serine 509 and serine 510 each carry the phosphoserine modification. Residues 533-555 show a composition bias toward polar residues; that stretch reads QQDNSEAGTQPQVQTDGQQTSQS. Residue serine 558 is modified to Phosphoserine. Threonine 562 carries the phosphothreonine modification. 2 stretches are compositionally biased toward basic and acidic residues: residues 564 to 585 and 806 to 815; these read EENKIPDADKANEKKVDQPPEA and PKIESPKLER. Phosphoserine is present on serine 810. Phosphothreonine is present on threonine 816.

The protein belongs to the heat shock protein 70 family. As to quaternary structure, interacts with HSPA8/HSC70. Interacts with HSPA1A (via NBD) and HSPA1B (via NBD). Phosphorylation on Ser-509 may be important for regulation of the HSPA8/HSC70 chaperone activity.

It is found in the cytoplasm. In terms of biological role, acts as a nucleotide-exchange factor (NEF) for chaperone proteins HSPA1A and HSPA1B, promoting the release of ADP from HSPA1A/B thereby triggering substrate release. Prevents the aggregation of denatured proteins in cells under severe stress, on which the ATP levels decrease markedly. Inhibits HSPA8/HSC70 ATPase and chaperone activities. This Rattus norvegicus (Rat) protein is Heat shock protein 105 kDa (Hsph1).